The chain runs to 288 residues: Ribosomal RNA small subunit methyltransferase A (288 aa).

S-adenosyl-L-methionine-binding residues include Asn-28, Leu-30, Gly-55, Glu-76, Asp-101, and Asn-130.

The protein belongs to the class I-like SAM-binding methyltransferase superfamily. rRNA adenine N(6)-methyltransferase family. RsmA subfamily.

The protein resides in the cytoplasm. The catalysed reaction is adenosine(1518)/adenosine(1519) in 16S rRNA + 4 S-adenosyl-L-methionine = N(6)-dimethyladenosine(1518)/N(6)-dimethyladenosine(1519) in 16S rRNA + 4 S-adenosyl-L-homocysteine + 4 H(+). Functionally, specifically dimethylates two adjacent adenosines (A1518 and A1519) in the loop of a conserved hairpin near the 3'-end of 16S rRNA in the 30S particle. May play a critical role in biogenesis of 30S subunits. The protein is Ribosomal RNA small subunit methyltransferase A of Moorella thermoacetica (strain ATCC 39073 / JCM 9320).